The primary structure comprises 211 residues: Interleukin-6 (211 aa).

An N-terminal signal peptide occupies residues 1-24 (MKFLSARDFQPVAFLGLMLLTATA). Cys70 and Cys76 are joined by a disulfide. Phosphoserine is present on Ser79. Cysteines 99 and 109 form a disulfide.

Belongs to the IL-6 superfamily. In terms of assembly, component of a hexamer of two molecules each of IL6, IL6R and IL6ST; first binds to IL6R to associate with the signaling subunit IL6ST. Interacts with IL6R (via the N-terminal ectodomain); this interaction may be affected by IL6R-binding with SORL1, hence decreasing IL6 cis signaling. Interacts with SORL1 (via the N-terminal ectodomain); this interaction leads to IL6 internalization and lysosomal degradation. May form a trimeric complex with the soluble SORL1 ectodomain and soluble IL6R receptor; this interaction might stabilize circulating IL6, hence promoting IL6 trans signaling.

The protein localises to the secreted. In terms of biological role, cytokine with a wide variety of biological functions in immunity, tissue regeneration, and metabolism. Binds to IL6R, then the complex associates to the signaling subunit IL6ST/gp130 to trigger the intracellular IL6-signaling pathway. The interaction with the membrane-bound IL6R and IL6ST stimulates 'classic signaling', whereas the binding of IL6 and soluble IL6R to IL6ST stimulates 'trans-signaling'. Alternatively, 'cluster signaling' occurs when membrane-bound IL6:IL6R complexes on transmitter cells activate IL6ST receptors on neighboring receiver cells. Functionally, IL6 is a potent inducer of the acute phase response. Rapid production of IL6 contributes to host defense during infection and tissue injury, but excessive IL6 synthesis is involved in disease pathology. In the innate immune response, is synthesized by myeloid cells, such as macrophages and dendritic cells, upon recognition of pathogens through toll-like receptors (TLRs) at the site of infection or tissue injury. In the adaptive immune response, is required for the differentiation of B-cells into immunoglolin-secreting cells. Plays a major role in the differentiation of CD4(+) T cell subsets. Essential factor for the development of T follicular helper (Tfh) cells that are required for the induction of germinal-center formation. Together with IL21, controls the early generation of Tfh cells and are critical for an effective antibody response to acute viral infection. Required to drive naive CD4(+) T cells to the Th17 lineage, through 'cluster signaling' by dendritic cells. Also required for proliferation of myeloma cells and the survival of plasmablast cells. Its function is as follows. Acts as an essential factor in bone homeostasis and on vessels directly or indirectly by induction of VEGF, resulting in increased angiogenesis activity and vascular permeability. Induces, through 'trans-signaling' and synergistically with IL1B and TNF, the production of VEGF. Involved in metabolic controls, is discharged into the bloodstream after muscle contraction increasing lipolysis and improving insulin resistance. 'Trans-signaling' in central nervous system regulates energy and glucose homeostasis. Mediates, through GLP-1, crosstalk between insulin-sensitive tissues, intestinal L cells and pancreatic islets to adapt to changes in insulin demand. Also acts as a myokine. Plays a protective role during liver injury, being required for maintenance of tissue regeneration. Also has a pivotal role in iron metabolism by regulating HAMP/hepcidin expression upon inflammation or bacterial infection. Through activation of IL6ST-YAP-NOTCH pathway, induces inflammation-induced epithelial regeneration. The chain is Interleukin-6 from Rattus norvegicus (Rat).